Consider the following 165-residue polypeptide: Cystatin-like protein (165 aa).

The first 19 residues, 1–19 (MDVALKLLLLAALTLLASA), serve as a signal peptide directing secretion. Disulfide bonds link Cys-80–Cys-92 and Cys-104–Cys-118.

Involved in hypoxia tolerance. This chain is Cystatin-like protein, found in Clarias batrachus (Walking catfish).